The following is a 351-amino-acid chain: Amylovoran biosynthesis glycosyltransferase AmsD (351 aa).

The protein belongs to the glycosyltransferase group 1 family. Glycosyltransferase 4 subfamily.

It participates in glycan metabolism; exopolysaccharide biosynthesis. Functionally, involved in the biosynthesis of amylovoran which functions as a virulence factor. May be involved in the formation of galactose alpha-1,6 linkages in amylovoran. The protein is Amylovoran biosynthesis glycosyltransferase AmsD (amsD) of Erwinia amylovora (Fire blight bacteria).